The following is a 1522-amino-acid chain: Rho guanine nucleotide exchange factor 11 (1522 aa).

The disordered stretch occupies residues 1–40; the sequence is MSVRLPQSIDRLSSLSSLGDSAPERKSPSHHRQPSDASET. Residues S2, S14, S16, and S35 each carry the phosphoserine modification. The PDZ domain maps to 47–126; the sequence is CVIIQKDQHG…LTLLGSSPSS (80 aa). Disordered stretches follow at residues 128–175 and 200–231; these read GISG…PEVQ and YGDT…ERFP. Pro residues predominate over residues 149–161; sequence PSPPPPPPLPPPQ. Phosphoserine occurs at positions 245 and 251. At T254 the chain carries Phosphothreonine. Phosphoserine is present on residues S255 and S271. The tract at residues 263–286 is disordered; it reads AQHHRRQGSDAAVPSTGDQGVDQS. An RGSL domain is found at 306-486; it reads ESDIIFQDLE…NTYMSHAGIR (181 aa). Residues 444–470 are a coiled coil; the sequence is LRERQVAEKQLAALGDILSKYEEDRSA. The segment at 490–555 is disordered; it reads ARPSNTAEKA…SSQSTFHIPL (66 aa). Residues 521 to 533 are compositionally biased toward basic and acidic residues; sequence SKKEKDALEDKKR. A phosphoserine mark is found at S556, S635, and S663. The interval 573–680 is disordered; the sequence is ENNQQYDAPE…FTPKMGRRSI (108 aa). Basic and acidic residues predominate over residues 601–637; that stretch reads DSSRSEIRLGRSESLKGREEMKRSRKAENVPRSRSDV. The segment covering 651–664 has biased composition (low complexity); that stretch reads SASSSTSSLSTRSL. T668 and T672 each carry phosphothreonine. The DH domain maps to 734–923; the sequence is DRQEVINELF…REILKYVNEA (190 aa). Residues 965-1079 form the PH domain; that stretch reads KMIHEGPLTW…WMELLEEAVR (115 aa). The tract at residues 1084-1141 is disordered; it reads HPGAAPMPVHPPPPGPREPAQQGPTPSRVELDDSDVFHGEPEPEELPGGTGSQQRVQG. Residues 1091 to 1100 are compositionally biased toward pro residues; sequence PVHPPPPGPR. Positions 1112–1124 are enriched in basic and acidic residues; the sequence is VELDDSDVFHGEP. Residue S1155 is modified to Phosphoserine. 3 disordered regions span residues 1223-1320, 1332-1423, and 1453-1522; these read ETQA…AGGY, KVVP…RDVG, and LGGE…SPGP. Polar residues predominate over residues 1236-1245; it reads PTPSVISVTS. Phosphoserine occurs at positions 1295 and 1300. A compositionally biased stretch (low complexity) spans 1338–1353; it reads PESGQSEPGPPEVEGG. A phosphoserine mark is found at S1457 and S1458. A phosphothreonine mark is found at T1462 and T1475. At S1480 the chain carries Phosphoserine. Residues 1503 to 1513 are compositionally biased toward acidic residues; it reads DGSDAPLEDST.

As to quaternary structure, interacts with GNA12 and GNA13 through the RGS domain. Interacts with RHOA, PLXNB1 and PLXNB2. Interacts with SLC1A6. Interacts (via DH domain) with GCSAM (via C-terminus). Found in a complex with ARHGEF11 and ARHGEF12; binding to ARHGEF11 and ARHGEF12 enhances CDC42 GEF activity of PLEKHG4B, and PLEKHG4B, in turn, inhibits ARHGEF11- and ARHGEF12-mediated RHOA activation. Post-translationally, phosphorylated by MAP kinase p38 (MAPK11, MAPK12, MAPK13 and/or MAPK14). In terms of processing, ubiquitinated by the BCR(KLHL20) E3 ubiquitin ligase complex when previously phosphorylated by MAP kinase p38 (MAPK11, MAPK12, MAPK13 and/or MAPK14), leading to its degradation, thereby restricting RhoA activity and facilitating growth cone spreading and neurite outgrowth. As to expression, ubiquitously expressed.

The protein localises to the cytoplasm. The protein resides in the membrane. May play a role in the regulation of RhoA GTPase by guanine nucleotide-binding alpha-12 (GNA12) and alpha-13 (GNA13). Acts as guanine nucleotide exchange factor (GEF) for RhoA GTPase and may act as GTPase-activating protein (GAP) for GNA12 and GNA13. Involved in neurotrophin-induced neurite outgrowth. This Homo sapiens (Human) protein is Rho guanine nucleotide exchange factor 11 (ARHGEF11).